The primary structure comprises 397 residues: Flavohemoprotein (397 aa).

One can recognise a Globin domain in the interval 4–140; sequence SFSPHTITLI…IANLLKDREA (137 aa). His87 is a binding site for heme b. Residues Tyr97 and Glu139 each act as charge relay system in the active site. The tract at residues 151–397 is reductase; sequence GGWIHWRRFV…FGPMDEEMAA (247 aa). Residues 154 to 258 enclose the FAD-binding FR-type domain; that stretch reads IHWRRFVISK…TPPVGDFFLP (105 aa). FAD-binding positions include Tyr192 and 207–210; that span reads RNYS. 271–276 serves as a coordination point for NADP(+); that stretch reads GVGLTP. FAD is bound at residue 387-390; sequence FFGP.

It belongs to the globin family. Two-domain flavohemoproteins subfamily. The protein in the C-terminal section; belongs to the flavoprotein pyridine nucleotide cytochrome reductase family. Requires heme b as cofactor. The cofactor is FAD.

The enzyme catalyses 2 nitric oxide + NADPH + 2 O2 = 2 nitrate + NADP(+) + H(+). It carries out the reaction 2 nitric oxide + NADH + 2 O2 = 2 nitrate + NAD(+) + H(+). Its function is as follows. Is involved in NO detoxification in an aerobic process, termed nitric oxide dioxygenase (NOD) reaction that utilizes O(2) and NAD(P)H to convert NO to nitrate, which protects the bacterium from various noxious nitrogen compounds. Therefore, plays a central role in the inducible response to nitrosative stress. The chain is Flavohemoprotein from Xylella fastidiosa (strain Temecula1 / ATCC 700964).